We begin with the raw amino-acid sequence, 141 residues long: Hemoglobin subunit alpha-A (141 aa).

The Globin domain occupies 1-141; the sequence is VLSGTDKTNV…VGAVLTAKYR (141 aa). His58 is an O2 binding site. His87 is a heme b binding site.

It belongs to the globin family. In terms of assembly, heterotetramer of two alpha chains and two beta chains. As to expression, red blood cells.

Its function is as follows. Involved in oxygen transport from the lung to the various peripheral tissues. The chain is Hemoglobin subunit alpha-A (HBAA) from Struthio camelus (Common ostrich).